Consider the following 348-residue polypeptide: Putative agmatine deiminase (348 aa).

The active-site Amidino-cysteine intermediate is cysteine 335.

This sequence belongs to the agmatine deiminase family.

The catalysed reaction is agmatine + H2O = N-carbamoylputrescine + NH4(+). In Legionella pneumophila subsp. pneumophila (strain Philadelphia 1 / ATCC 33152 / DSM 7513), this protein is Putative agmatine deiminase.